Reading from the N-terminus, the 360-residue chain is DNA replication and repair protein RecF (360 aa).

30 to 37 (GQNGSGKT) is a binding site for ATP.

The protein belongs to the RecF family.

It is found in the cytoplasm. In terms of biological role, the RecF protein is involved in DNA metabolism; it is required for DNA replication and normal SOS inducibility. RecF binds preferentially to single-stranded, linear DNA. It also seems to bind ATP. In Shewanella putrefaciens (strain CN-32 / ATCC BAA-453), this protein is DNA replication and repair protein RecF.